A 116-amino-acid chain; its full sequence is MSNIIKQLEQEQLKQNLPSFRPGDTLEVKVWVVEGSKRRLQAFEGVVIAIRNRGLHSAFTLRKVSNGVGVERVFQTHSPIVDSITVKRKGAVRQAKLYYLRERSGKSARIKERLGD.

It belongs to the bacterial ribosomal protein bL19 family.

Its function is as follows. This protein is located at the 30S-50S ribosomal subunit interface and may play a role in the structure and function of the aminoacyl-tRNA binding site. This is Large ribosomal subunit protein bL19 from Pasteurella multocida (strain Pm70).